Reading from the N-terminus, the 96-residue chain is Probable quinol oxidase subunit 4 (96 aa).

3 consecutive transmembrane segments (helical) span residues 8 to 28 (TVGF…TLYT), 36 to 56 (LTII…MFMH), and 68 to 88 (FKVI…YWVM).

Belongs to the cytochrome c oxidase bacterial subunit 4 family.

The protein resides in the cell membrane. It carries out the reaction 2 a quinol + O2 = 2 a quinone + 2 H2O. In terms of biological role, catalyzes quinol oxidation with the concomitant reduction of oxygen to water. The polypeptide is Probable quinol oxidase subunit 4 (qoxD) (Staphylococcus aureus (strain USA300)).